A 117-amino-acid polypeptide reads, in one-letter code: Large ribosomal subunit protein bL20 (117 aa).

This sequence belongs to the bacterial ribosomal protein bL20 family.

Binds directly to 23S ribosomal RNA and is necessary for the in vitro assembly process of the 50S ribosomal subunit. It is not involved in the protein synthesizing functions of that subunit. The chain is Large ribosomal subunit protein bL20 from Rickettsia massiliae (strain Mtu5).